The primary structure comprises 177 residues: Isopentenyl-diphosphate Delta-isomerase 2 (177 aa).

Residues H24 and H30 each contribute to the Mn(2+) site. In terms of domain architecture, Nudix hydrolase spans M28–K160. C65 is an active-site residue. C65 lines the Mg(2+) pocket. H67 contributes to the Mn(2+) binding site. E85 contacts Mg(2+). 2 residues coordinate Mn(2+): E110 and E112. Residue E112 is part of the active site.

Belongs to the IPP isomerase type 1 family. Homodimer. Requires Mg(2+) as cofactor. Mn(2+) is required as a cofactor.

It localises to the cytoplasm. The enzyme catalyses isopentenyl diphosphate = dimethylallyl diphosphate. It participates in isoprenoid biosynthesis; dimethylallyl diphosphate biosynthesis; dimethylallyl diphosphate from isopentenyl diphosphate: step 1/1. Catalyzes the 1,3-allylic rearrangement of the homoallylic substrate isopentenyl (IPP) to its highly electrophilic allylic isomer, dimethylallyl diphosphate (DMAPP). The polypeptide is Isopentenyl-diphosphate Delta-isomerase 2 (Photorhabdus laumondii subsp. laumondii (strain DSM 15139 / CIP 105565 / TT01) (Photorhabdus luminescens subsp. laumondii)).